The sequence spans 195 residues: ATP-dependent Clp protease proteolytic subunit (195 aa).

Serine 98 acts as the Nucleophile in catalysis. Histidine 123 is an active-site residue.

The protein belongs to the peptidase S14 family. Fourteen ClpP subunits assemble into 2 heptameric rings which stack back to back to give a disk-like structure with a central cavity, resembling the structure of eukaryotic proteasomes.

The protein resides in the cytoplasm. The catalysed reaction is Hydrolysis of proteins to small peptides in the presence of ATP and magnesium. alpha-casein is the usual test substrate. In the absence of ATP, only oligopeptides shorter than five residues are hydrolyzed (such as succinyl-Leu-Tyr-|-NHMec, and Leu-Tyr-Leu-|-Tyr-Trp, in which cleavage of the -Tyr-|-Leu- and -Tyr-|-Trp bonds also occurs).. In terms of biological role, cleaves peptides in various proteins in a process that requires ATP hydrolysis. Has a chymotrypsin-like activity. Plays a major role in the degradation of misfolded proteins. The protein is ATP-dependent Clp protease proteolytic subunit of Alkaliphilus oremlandii (strain OhILAs) (Clostridium oremlandii (strain OhILAs)).